A 520-amino-acid chain; its full sequence is Bifunctional dihydrofolate reductase-thymidylate synthase (520 aa).

The region spanning 26 to 229 is the DHFR domain; that stretch reads AFSIVVALDK…LEFEICKYVP (204 aa). V30 lines the substrate pocket. NADP(+) is bound by residues A32 and 38-44; that span reads GIGDGES. D52 serves as a coordination point for substrate. NADP(+)-binding positions include 81-83, 102-105, and 157-164; these read RKT, LSSK, and GGAQVYAD. Residues Y162 and T180 each coordinate substrate. Residues 234 to 520 form a thymidylate synthase region; sequence ERQYLELIDR…HPPIKMEMAV (287 aa). R254 contributes to the dUMP binding site. C400 is a catalytic residue. DUMP is bound by residues H401, 421 to 425, N433, and 463 to 465; these read QRSCD and HVY.

It in the N-terminal section; belongs to the dihydrofolate reductase family. This sequence in the C-terminal section; belongs to the thymidylate synthase family.

It catalyses the reaction (6S)-5,6,7,8-tetrahydrofolate + NADP(+) = 7,8-dihydrofolate + NADPH + H(+). It carries out the reaction dUMP + (6R)-5,10-methylene-5,6,7,8-tetrahydrofolate = 7,8-dihydrofolate + dTMP. It functions in the pathway cofactor biosynthesis; tetrahydrofolate biosynthesis; 5,6,7,8-tetrahydrofolate from 7,8-dihydrofolate: step 1/1. Its function is as follows. Bifunctional enzyme. Involved in de novo dTMP biosynthesis. Key enzyme in folate metabolism. Catalyzes an essential reaction for de novo glycine and purine synthesis, DNA precursor synthesis, and for the conversion of dUMP to dTMP. This Leishmania amazonensis protein is Bifunctional dihydrofolate reductase-thymidylate synthase.